Consider the following 512-residue polypeptide: Pentatricopeptide repeat-containing protein At1g64583, mitochondrial (512 aa).

The N-terminal 34 residues, 1–34, are a transit peptide targeting the mitochondrion; sequence MRRLIVTGIATSTAKGFRRVVNPNLLGGGAAARA. 12 PPR repeats span residues 70-104, 105-139, 140-174, 175-209, 210-244, 245-279, 280-314, 315-349, 350-384, 385-415, 420-454, and 455-489; these read SIVD…GISH, DLYS…GYEP, SIVT…GYEP, NVVV…GLGA, DVVT…SINP, DVVT…SVDP, NNVT…GCFP, NVVT…GFNA, DIFT…RVTP, DIIT…MRES, GIVA…GVKP, and DART…GIIC.

It belongs to the PPR family. P subfamily.

It is found in the mitochondrion. In Arabidopsis thaliana (Mouse-ear cress), this protein is Pentatricopeptide repeat-containing protein At1g64583, mitochondrial.